A 227-amino-acid chain; its full sequence is Small ribosomal subunit protein uS3 (227 aa).

The 71-residue stretch at 39-109 folds into the KH type-2 domain; it reads IHRFFEKLTR…KIVINVDAVD (71 aa).

Belongs to the universal ribosomal protein uS3 family. As to quaternary structure, part of the 30S ribosomal subunit. Forms a tight complex with proteins S10 and S14.

In terms of biological role, binds the lower part of the 30S subunit head. Binds mRNA in the 70S ribosome, positioning it for translation. The polypeptide is Small ribosomal subunit protein uS3 (Mesomycoplasma hyopneumoniae (strain 232) (Mycoplasma hyopneumoniae)).